A 466-amino-acid polypeptide reads, in one-letter code: Soluble pyridine nucleotide transhydrogenase (466 aa).

36–45 (ERYQNVGGGC) provides a ligand contact to FAD.

It belongs to the class-I pyridine nucleotide-disulfide oxidoreductase family. FAD is required as a cofactor.

It localises to the cytoplasm. The enzyme catalyses NAD(+) + NADPH = NADH + NADP(+). Conversion of NADPH, generated by peripheral catabolic pathways, to NADH, which can enter the respiratory chain for energy generation. The protein is Soluble pyridine nucleotide transhydrogenase of Escherichia coli O9:H4 (strain HS).